Here is an 892-residue protein sequence, read N- to C-terminus: Alanine--tRNA ligase (892 aa).

Zn(2+) is bound by residues His578, His582, Cys681, and His685.

It belongs to the class-II aminoacyl-tRNA synthetase family. Zn(2+) is required as a cofactor.

The protein localises to the cytoplasm. It carries out the reaction tRNA(Ala) + L-alanine + ATP = L-alanyl-tRNA(Ala) + AMP + diphosphate. Its function is as follows. Catalyzes the attachment of alanine to tRNA(Ala) in a two-step reaction: alanine is first activated by ATP to form Ala-AMP and then transferred to the acceptor end of tRNA(Ala). Also edits incorrectly charged Ser-tRNA(Ala) and Gly-tRNA(Ala) via its editing domain. The chain is Alanine--tRNA ligase from Cutibacterium acnes (strain DSM 16379 / KPA171202) (Propionibacterium acnes).